Reading from the N-terminus, the 374-residue chain is Chaperone protein DnaJ (374 aa).

In terms of domain architecture, J spans 3–67 (DFYQILGVSR…ETRARYDQFG (65 aa)). The tract at residues 99–118 (GQSSQGGRSQRRGPQQGDDL) is disordered. Low complexity predominate over residues 103–115 (QGGRSQRRGPQQG). The CR-type zinc-finger motif lies at 132 to 214 (GQQREINIPH…CGGNGVKQVR (83 aa)). C145, C148, C162, C165, C188, C191, C202, and C205 together coordinate Zn(2+). 4 CXXCXGXG motif repeats span residues 145-152 (CEVCRGTG), 162-169 (CTTCGGSG), 188-195 (CPTCNGVG), and 202-209 (CTSCGGNG).

The protein belongs to the DnaJ family. In terms of assembly, homodimer. Zn(2+) serves as cofactor.

It is found in the cytoplasm. Its function is as follows. Participates actively in the response to hyperosmotic and heat shock by preventing the aggregation of stress-denatured proteins and by disaggregating proteins, also in an autonomous, DnaK-independent fashion. Unfolded proteins bind initially to DnaJ; upon interaction with the DnaJ-bound protein, DnaK hydrolyzes its bound ATP, resulting in the formation of a stable complex. GrpE releases ADP from DnaK; ATP binding to DnaK triggers the release of the substrate protein, thus completing the reaction cycle. Several rounds of ATP-dependent interactions between DnaJ, DnaK and GrpE are required for fully efficient folding. Also involved, together with DnaK and GrpE, in the DNA replication of plasmids through activation of initiation proteins. The chain is Chaperone protein DnaJ from Prochlorococcus marinus subsp. pastoris (strain CCMP1986 / NIES-2087 / MED4).